We begin with the raw amino-acid sequence, 122 residues long: Large ribosomal subunit protein bL12 (122 aa).

Belongs to the bacterial ribosomal protein bL12 family. As to quaternary structure, homodimer. Part of the ribosomal stalk of the 50S ribosomal subunit. Forms a multimeric L10(L12)X complex, where L10 forms an elongated spine to which 2 to 4 L12 dimers bind in a sequential fashion. Binds GTP-bound translation factors.

Forms part of the ribosomal stalk which helps the ribosome interact with GTP-bound translation factors. Is thus essential for accurate translation. The protein is Large ribosomal subunit protein bL12 of Actinobacillus succinogenes (strain ATCC 55618 / DSM 22257 / CCUG 43843 / 130Z).